The chain runs to 344 residues: Aurora kinase B (344 aa).

A disordered region spans residues 1 to 22 (MAQKENSYPWPYGRQTAPSGLS). Threonine 35 carries the post-translational modification Phosphothreonine. Serine 62 is subject to Phosphoserine. Threonine 64 carries the phosphothreonine modification. The Protein kinase domain occupies 77–327 (FEIGRPLGKG…LAQVSAHPWV (251 aa)). ATP contacts are provided by residues 83 to 91 (LGKGKFGNV) and lysine 106. Aspartate 200 functions as the Proton acceptor in the catalytic mechanism. At lysine 215 the chain carries N6-acetyllysine. Serine 227 is modified (phosphoserine). At threonine 232 the chain carries Phosphothreonine; by autocatalysis.

The protein belongs to the protein kinase superfamily. Ser/Thr protein kinase family. Aurora subfamily. Component of the chromosomal passenger complex (CPC) composed of at least BIRC5/survivin, CDCA8/borealin, INCENP, AURKB or AURKC; predominantly independent AURKB- and AURKC-containing complexes exist. Associates with RACGAP1 during M phase. Interacts with SPDYC; this interaction may be required for proper localization of active, Thr-232-phosphorylated AURKB form during prometaphase and metaphase. Interacts with p53/TP53. Interacts (via the middle kinase domain) with NOC2L (via the N- and C-terminus domains). Interacts with CDCA1. Interacts with EVI5. Interacts with JTB. Interacts with NDC80. Interacts with PSMA3. Interacts with RNF2/RING1B. Interacts with SEPTIN1. Interacts with SIRT2. Interacts with TACC1. Interacts with TTC28. In terms of processing, the phosphorylation of Thr-232 requires the binding to INCENP and occurs by means of an autophosphorylation mechanism. Thr-232 phosphorylation is indispensable for the AURKB kinase activity. Acetylated at Lys-215 by KAT5 at kinetochores, increasing AURKB activity and promoting accurate chromosome segregation in mitosis. Post-translationally, ubiquitinated by different BCR (BTB-CUL3-RBX1) E3 ubiquitin ligase complexes. Ubiquitinated by the BCR(KLHL9-KLHL13) E3 ubiquitin ligase complex, ubiquitination leads to removal from mitotic chromosomes and is required for cytokinesis. During anaphase, the BCR(KLHL21) E3 ubiquitin ligase complex recruits the CPC complex from chromosomes to the spindle midzone and mediates the ubiquitination of AURKB. Ubiquitination of AURKB by BCR(KLHL21) E3 ubiquitin ligase complex may not lead to its degradation by the proteasome. Deubiquitinated by USP35; inhibiting CDH1-mediated degradation of AURKB. As to expression, high level expression seen in the thymus. It is also expressed in the spleen, lung, testis, colon, placenta and fetal liver. Expressed during S and G2/M phase and expression is up-regulated in cancer cells during M phase. In terms of tissue distribution, not expressed in normal liver, high expression in metastatic liver.

Its subcellular location is the nucleus. It localises to the chromosome. The protein localises to the centromere. It is found in the kinetochore. The protein resides in the cytoplasm. Its subcellular location is the cytoskeleton. It localises to the spindle. The protein localises to the midbody. The enzyme catalyses L-seryl-[protein] + ATP = O-phospho-L-seryl-[protein] + ADP + H(+). It carries out the reaction L-threonyl-[protein] + ATP = O-phospho-L-threonyl-[protein] + ADP + H(+). Activity is greatly increased when AURKB is within the CPC complex. In particular, AURKB-phosphorylated INCENP acts as an activator of AURKB. Positive feedback between HASPIN and AURKB contributes to CPC localization. Inhibited by ZM447439. Its function is as follows. Serine/threonine-protein kinase component of the chromosomal passenger complex (CPC), a complex that acts as a key regulator of mitosis. The CPC complex has essential functions at the centromere in ensuring correct chromosome alignment and segregation and is required for chromatin-induced microtubule stabilization and spindle assembly. Involved in the bipolar attachment of spindle microtubules to kinetochores and is a key regulator for the onset of cytokinesis during mitosis. Required for central/midzone spindle assembly and cleavage furrow formation. Key component of the cytokinesis checkpoint, a process required to delay abscission to prevent both premature resolution of intercellular chromosome bridges and accumulation of DNA damage: phosphorylates CHMP4C, leading to retain abscission-competent VPS4 (VPS4A and/or VPS4B) at the midbody ring until abscission checkpoint signaling is terminated at late cytokinesis. AURKB phosphorylates the CPC complex subunits BIRC5/survivin, CDCA8/borealin and INCENP. Phosphorylation of INCENP leads to increased AURKB activity. Other known AURKB substrates involved in centromeric functions and mitosis are CENPA, DES/desmin, GPAF, KIF2C, NSUN2, RACGAP1, SEPTIN1, VIM/vimentin, HASPIN, and histone H3. A positive feedback loop involving HASPIN and AURKB contributes to localization of CPC to centromeres. Phosphorylation of VIM controls vimentin filament segregation in cytokinetic process, whereas histone H3 is phosphorylated at 'Ser-10' and 'Ser-28' during mitosis (H3S10ph and H3S28ph, respectively). AURKB is also required for kinetochore localization of BUB1 and SGO1. Phosphorylation of p53/TP53 negatively regulates its transcriptional activity. Key regulator of active promoters in resting B- and T-lymphocytes: acts by mediating phosphorylation of H3S28ph at active promoters in resting B-cells, inhibiting RNF2/RING1B-mediated ubiquitination of histone H2A and enhancing binding and activity of the USP16 deubiquitinase at transcribed genes. Acts as an inhibitor of CGAS during mitosis: catalyzes phosphorylation of the N-terminus of CGAS during the G2-M transition, blocking CGAS liquid phase separation and activation, and thereby preventing CGAS-induced autoimmunity. Phosphorylates KRT5 during anaphase and telophase. Phosphorylates ATXN10 which promotes phosphorylation of ATXN10 by PLK1 and may play a role in the regulation of cytokinesis and stimulating the proteasomal degradation of ATXN10. The chain is Aurora kinase B (AURKB) from Homo sapiens (Human).